Here is a 122-residue protein sequence, read N- to C-terminus: Large ribosomal subunit protein uL14 (122 aa).

The protein belongs to the universal ribosomal protein uL14 family. As to quaternary structure, part of the 50S ribosomal subunit. Forms a cluster with proteins L3 and L19. In the 70S ribosome, L14 and L19 interact and together make contacts with the 16S rRNA in bridges B5 and B8.

Its function is as follows. Binds to 23S rRNA. Forms part of two intersubunit bridges in the 70S ribosome. In Shewanella frigidimarina (strain NCIMB 400), this protein is Large ribosomal subunit protein uL14.